Reading from the N-terminus, the 294-residue chain is 4-hydroxy-tetrahydrodipicolinate synthase (294 aa).

Residue Thr45 participates in pyruvate binding. Catalysis depends on Tyr133, which acts as the Proton donor/acceptor. Residue Lys162 is the Schiff-base intermediate with substrate of the active site. Ile204 contributes to the pyruvate binding site.

This sequence belongs to the DapA family. Homotetramer; dimer of dimers.

It localises to the cytoplasm. It carries out the reaction L-aspartate 4-semialdehyde + pyruvate = (2S,4S)-4-hydroxy-2,3,4,5-tetrahydrodipicolinate + H2O + H(+). It functions in the pathway amino-acid biosynthesis; L-lysine biosynthesis via DAP pathway; (S)-tetrahydrodipicolinate from L-aspartate: step 3/4. Functionally, catalyzes the condensation of (S)-aspartate-beta-semialdehyde [(S)-ASA] and pyruvate to 4-hydroxy-tetrahydrodipicolinate (HTPA). This chain is 4-hydroxy-tetrahydrodipicolinate synthase, found in Bartonella henselae (strain ATCC 49882 / DSM 28221 / CCUG 30454 / Houston 1) (Rochalimaea henselae).